A 175-amino-acid polypeptide reads, in one-letter code: Nascent polypeptide-associated complex subunit beta (175 aa).

Disordered stretches follow at residues M1–D36 and R129–E175. An NAC-A/B domain is found at Q34 to V101. A compositionally biased stretch (acidic residues) spans E149–E163. Positions A164 to E175 are enriched in basic and acidic residues.

The protein belongs to the NAC-beta family. Part of the nascent polypeptide-associated complex (NAC), consisting of EGD2 and EGD1. NAC associates with ribosomes via EGD1.

It is found in the cytoplasm. The protein resides in the nucleus. Its function is as follows. Component of the nascent polypeptide-associated complex (NAC), a dynamic component of the ribosomal exit tunnel, protecting the emerging polypeptides from interaction with other cytoplasmic proteins to ensure appropriate nascent protein targeting. The NAC complex also promotes mitochondrial protein import by enhancing productive ribosome interactions with the outer mitochondrial membrane and blocks the inappropriate interaction of ribosomes translating non-secretory nascent polypeptides with translocation sites in the membrane of the endoplasmic reticulum. EGD1 may act as a transcription factor that exert a negative effect on the expression of several genes that are transcribed by RNA polymerase II. This is Nascent polypeptide-associated complex subunit beta (EGD1) from Cryptococcus neoformans var. neoformans serotype D (strain B-3501A) (Filobasidiella neoformans).